A 429-amino-acid polypeptide reads, in one-letter code: ATP-dependent RNA helicase RhlB (429 aa).

The Q motif signature appears at 9 to 37 (DKFAQMGLEPEVLAGLESKGFHYCTPIQA). The 180-residue stretch at 40 to 219 (LPLLVEGHDL…YEHMNHPEHV (180 aa)) folds into the Helicase ATP-binding domain. 53–60 (AQTGTGKT) serves as a coordination point for ATP. A DEAD box motif is present at residues 165–168 (DEAD). Residues 243–390 (KMLLLLSLME…VSKYDREALL (148 aa)) form the Helicase C-terminal domain. Positions 399–429 (VFRNRQPVNRNMRDRQGGGNSNNRRRPPRKS) are disordered.

This sequence belongs to the DEAD box helicase family. RhlB subfamily. Component of the RNA degradosome, which is a multiprotein complex involved in RNA processing and mRNA degradation.

The protein resides in the cytoplasm. The enzyme catalyses ATP + H2O = ADP + phosphate + H(+). DEAD-box RNA helicase involved in RNA degradation. Has RNA-dependent ATPase activity and unwinds double-stranded RNA. The sequence is that of ATP-dependent RNA helicase RhlB from Aeromonas hydrophila subsp. hydrophila (strain ATCC 7966 / DSM 30187 / BCRC 13018 / CCUG 14551 / JCM 1027 / KCTC 2358 / NCIMB 9240 / NCTC 8049).